The following is a 481-amino-acid chain: Cysteine--tRNA ligase (481 aa).

Cys43 contacts Zn(2+). The 'HIGH' region signature appears at 45-55 (ATVQGLPHIGH). Zn(2+) contacts are provided by Cys221, His246, and Glu250. Positions 277–281 (KMSKS) match the 'KMSKS' region motif. Lys280 serves as a coordination point for ATP.

This sequence belongs to the class-I aminoacyl-tRNA synthetase family. As to quaternary structure, monomer. Zn(2+) serves as cofactor.

The protein localises to the cytoplasm. The enzyme catalyses tRNA(Cys) + L-cysteine + ATP = L-cysteinyl-tRNA(Cys) + AMP + diphosphate. This is Cysteine--tRNA ligase from Mycobacterium sp. (strain KMS).